We begin with the raw amino-acid sequence, 357 residues long: DNA replication and repair protein RecF (357 aa).

ATP is bound at residue 31–38; it reads GQNGAGKT.

Belongs to the RecF family.

The protein resides in the cytoplasm. The RecF protein is involved in DNA metabolism; it is required for DNA replication and normal SOS inducibility. RecF binds preferentially to single-stranded, linear DNA. It also seems to bind ATP. This is DNA replication and repair protein RecF from Coxiella burnetii (strain RSA 493 / Nine Mile phase I).